A 442-amino-acid chain; its full sequence is C4-dicarboxylate transport protein 4 (442 aa).

6 consecutive transmembrane segments (helical) span residues 20 to 40 (ILYV…YFYP), 53 to 73 (FIAL…VHGI), 90 to 110 (LIYF…VGEV), 160 to 180 (GDLL…AFLG), 209 to 229 (PVGA…GSLL), and 233 to 253 (ALIG…LGAI).

Belongs to the dicarboxylate/amino acid:cation symporter (DAACS) (TC 2.A.23) family.

Its subcellular location is the cell inner membrane. Responsible for the transport of dicarboxylates such as succinate, fumarate, and malate from the periplasm across the membrane. The polypeptide is C4-dicarboxylate transport protein 4 (Bradyrhizobium diazoefficiens (strain JCM 10833 / BCRC 13528 / IAM 13628 / NBRC 14792 / USDA 110)).